An 888-amino-acid chain; its full sequence is Interference hedgehog (888 aa).

The first 24 residues, 1–24, serve as a signal peptide directing secretion; that stretch reads MSLTRFSLCLLLTLLLAAIPVYLA. The Extracellular portion of the chain corresponds to 25–688; that stretch reads SPDPGVRILR…SHNETFNLNP (664 aa). Ig-like C2-type domains lie at 28–123, 134–215, 234–321, and 327–414; these read PGVR…ARLE, EGFK…VRLA, PHLL…SIQL, and PRIV…LQVN. Disulfide bonds link Cys-51–Cys-106, Cys-155–Cys-203, and Cys-257–Cys-305. 8 N-linked (GlcNAc...) asparagine glycosylation sites follow: Asn-80, Asn-185, Asn-192, Asn-281, Asn-336, Asn-365, Asn-369, and Asn-455. A disulfide bridge links Cys-348 with Cys-396. 2 consecutive Fibronectin type-III domains span residues 450–557 and 565–660; these read PPSA…LQRG and VPSL…TQRP. Positions 486 and 493 each coordinate heparin. Asn-516 carries N-linked (GlcNAc...) asparagine glycosylation. Position 531 (Arg-531) interacts with heparin. The N-linked (GlcNAc...) asparagine glycan is linked to Asn-547. A compositionally biased stretch (polar residues) spans 655 to 667; that stretch reads GRTQRPRVSTTTE. The segment at 655 to 679 is disordered; it reads GRTQRPRVSTTTEPAVHAMDTTTPS. Asn-681 carries an N-linked (GlcNAc...) asparagine glycan. A helical transmembrane segment spans residues 689–709; sequence LLTGTIGGGALLVLLVVSACL. Residues 710–888 lie on the Cytoplasmic side of the membrane; that stretch reads CLCRRRSSRG…SSGSLNSVGV (179 aa). Disordered stretches follow at residues 759 to 789, 812 to 864, and 869 to 888; these read AQQQ…DMSY, SSSL…PGRV, and ARLS…SVGV. Residues 760–775 are compositionally biased toward low complexity; sequence QQQQQQQQQQQQQQQQ. Residues 843–859 show a composition bias toward polar residues; it reads QPTDGSTADSPRLQASN. Positions 872 to 888 are enriched in low complexity; it reads SSRSENLSSGSLNSVGV.

This sequence belongs to the immunoglobulin superfamily. IHOG family. As to quaternary structure, homodimer. Heterotetramer; 2 iHog chains bind 2 hh chains when facilitated by heparin, heparin is required to promote high-affinity interactions between hh and iHog.

It localises to the membrane. Mediates response to the active Hedgehog (Hh) protein signal in embryos, functioning upstream or at the level of patched (ptc). In Drosophila grimshawi (Hawaiian fruit fly), this protein is Interference hedgehog.